The primary structure comprises 274 residues: Phosphoribosylaminoimidazole-succinocarboxamide synthase (274 aa).

This sequence belongs to the SAICAR synthetase family.

It carries out the reaction 5-amino-1-(5-phospho-D-ribosyl)imidazole-4-carboxylate + L-aspartate + ATP = (2S)-2-[5-amino-1-(5-phospho-beta-D-ribosyl)imidazole-4-carboxamido]succinate + ADP + phosphate + 2 H(+). Its pathway is purine metabolism; IMP biosynthesis via de novo pathway; 5-amino-1-(5-phospho-D-ribosyl)imidazole-4-carboxamide from 5-amino-1-(5-phospho-D-ribosyl)imidazole-4-carboxylate: step 1/2. This chain is Phosphoribosylaminoimidazole-succinocarboxamide synthase, found in Nitrosopumilus maritimus (strain SCM1).